The chain runs to 406 residues: Odorant receptor 42a (406 aa).

The Cytoplasmic portion of the chain corresponds to 1–44 (MDLRRWFPTLYTQSKDSPVRSRDATLYLLRCVFLMGVRKPPAKF). A helical membrane pass occupies residues 45 to 65 (FVAYVLWSFALNFCSTFYQPI). Topologically, residues 66–86 (GFLTGYISHLSEFSPGEFLTS) are extracellular. Residues 87 to 107 (LQVAFNAWSCSTKVLIVWALV) form a helical membrane-spanning segment. The Cytoplasmic portion of the chain corresponds to 108–142 (KRFDEANNLLDEMDRRITDPGERLQIHRAVSLSNR). A helical membrane pass occupies residues 143–163 (IFFFFMAVYMVYATNTFLSAI). The Extracellular portion of the chain corresponds to 164–181 (FIGRPPYQNYYPFLDWRS). A helical transmembrane segment spans residues 182-202 (STLHLALQAGLEYFAMAGACF). The Cytoplasmic portion of the chain corresponds to 203–271 (QDVCVDCYPV…DCLRPVISGT (69 aa)). A helical transmembrane segment spans residues 272 to 292 (IFVQFLVVGLVLGFTLINIVL). Topologically, residues 293–298 (FANLGS) are extracellular. Residues 299 to 319 (AIAALSFMAAVLLETTPFCIL) form a helical membrane-spanning segment. Topologically, residues 320 to 359 (CNYLTEDCYKLADALFQSNWIDEEKRYQKTLMYFLQKLQQ) are cytoplasmic. Residues 360–380 (PITFMAMNVFPISVGTNISVT) form a helical membrane-spanning segment. The Extracellular portion of the chain corresponds to 381 to 406 (KFSFSVFTLVKQMNISEKLAKSEMEE). Residue N394 is glycosylated (N-linked (GlcNAc...) asparagine).

Belongs to the insect chemoreceptor superfamily. Heteromeric odorant receptor channel (TC 1.A.69) family. Or2a subfamily. As to quaternary structure, interacts with Orco. Complexes exist early in the endomembrane system in olfactory sensory neurons (OSNs), coupling these complexes to the conserved ciliary trafficking pathway.

It is found in the cell membrane. Functionally, odorant receptor which mediates acceptance or avoidance behavior, depending on its substrates. The odorant receptor repertoire encodes a large collection of odor stimuli that vary widely in identity, intensity, and duration. May form a complex with Orco to form odorant-sensing units, providing sensitive and prolonged odorant signaling and calcium permeability. Involved in the behavioral responses to butanol, ethyl acetate, propyl acetate, and pentyl acetate. Also responds to pyrazines. This chain is Odorant receptor 42a (Or42a), found in Drosophila melanogaster (Fruit fly).